The primary structure comprises 483 residues: UDP-N-acetylmuramoyl-L-alanyl-D-glutamate--2,6-diaminopimelate ligase (483 aa).

Ser-29 serves as a coordination point for UDP-N-acetyl-alpha-D-muramoyl-L-alanyl-D-glutamate. ATP is bound at residue 107 to 113 (GTSGKTS). Residues 149–150 (TT), Ser-176, Gln-182, and Arg-184 each bind UDP-N-acetyl-alpha-D-muramoyl-L-alanyl-D-glutamate. Residue Lys-216 is modified to N6-carboxylysine. Meso-2,6-diaminopimelate contacts are provided by residues Arg-380, 404-407 (DNPR), Gly-452, and Glu-456. A Meso-diaminopimelate recognition motif motif is present at residues 404-407 (DNPR).

Belongs to the MurCDEF family. MurE subfamily. The cofactor is Mg(2+). Post-translationally, carboxylation is probably crucial for Mg(2+) binding and, consequently, for the gamma-phosphate positioning of ATP.

It is found in the cytoplasm. It carries out the reaction UDP-N-acetyl-alpha-D-muramoyl-L-alanyl-D-glutamate + meso-2,6-diaminopimelate + ATP = UDP-N-acetyl-alpha-D-muramoyl-L-alanyl-gamma-D-glutamyl-meso-2,6-diaminopimelate + ADP + phosphate + H(+). The protein operates within cell wall biogenesis; peptidoglycan biosynthesis. Functionally, catalyzes the addition of meso-diaminopimelic acid to the nucleotide precursor UDP-N-acetylmuramoyl-L-alanyl-D-glutamate (UMAG) in the biosynthesis of bacterial cell-wall peptidoglycan. In Chelativorans sp. (strain BNC1), this protein is UDP-N-acetylmuramoyl-L-alanyl-D-glutamate--2,6-diaminopimelate ligase.